The chain runs to 334 residues: Histo-blood group ABO system transferase 2 (334 aa).

At 1–15 the chain is on the cytoplasmic side; it reads MKDLRFGRLKCYSLH. A helical; Signal-anchor for type II membrane protein membrane pass occupies residues 16–36; sequence LGILPLTVLVLVFFCFVCLSL. Topologically, residues 37–334 are lumenal; that stretch reads RSQEWGHPGA…VPKNHQAIRN (298 aa). N-linked (GlcNAc...) asparagine glycosylation is present at Asn94. UDP-N-acetyl-alpha-D-galactosamine-binding positions include 102–104, Tyr107, and 192–194; these read FAV and DVD. Asp192 and Asp194 together coordinate Mn(2+). Residues His214, Thr226, Glu284, and Asp307 each coordinate an alpha-L-fucosyl-(1-&gt;2)-beta-D-galactosyl derivative. Glu284 functions as the Nucleophile in the catalytic mechanism.

It belongs to the glycosyltransferase 6 family. The cofactor is Mn(2+). Large intestine, caecum, stomach, pancreas, submaxillary gland and kidney (at protein level). Ubiquitous.

Its subcellular location is the golgi apparatus. It localises to the golgi stack membrane. The protein resides in the secreted. It carries out the reaction an alpha-L-fucosyl-(1-&gt;2)-beta-D-galactosyl derivative + UDP-N-acetyl-alpha-D-galactosamine = an N-acetyl-alpha-D-galactosaminyl-(1-&gt;3)-[alpha-L-fucosyl-(1-&gt;2)]-beta-D-galactosyl derivative + UDP + H(+). The catalysed reaction is an alpha-L-fucosyl-(1-&gt;2)-beta-D-galactosyl derivative + UDP-alpha-D-galactose = an alpha-D-galactosyl-(1-&gt;3)-[alpha-L-fucosyl-(1-&gt;2)]-beta-D-galactosyl derivative + UDP + H(+). Its pathway is protein modification; protein glycosylation. Possesses strong B transferase activity and weak A transferase activity. The protein is Histo-blood group ABO system transferase 2 (Abo2) of Rattus norvegicus (Rat).